Reading from the N-terminus, the 188-residue chain is UPF0301 protein azo3459 (188 aa).

It belongs to the UPF0301 (AlgH) family.

This is UPF0301 protein azo3459 from Azoarcus sp. (strain BH72).